Reading from the N-terminus, the 154-residue chain is Ascorbate-specific PTS system EIIA component (154 aa).

A PTS EIIA type-2 domain is found at 6 to 150 (SLAENKSIRL…QEVLDLIDRT (145 aa)). His68 serves as the catalytic Tele-phosphohistidine intermediate. At His68 the chain carries Phosphohistidine.

It is found in the cytoplasm. The phosphoenolpyruvate-dependent sugar phosphotransferase system (sugar PTS), a major carbohydrate active transport system, catalyzes the phosphorylation of incoming sugar substrates concomitantly with their translocation across the cell membrane. The enzyme II UlaABC PTS system is involved in ascorbate transport. The sequence is that of Ascorbate-specific PTS system EIIA component (ulaC) from Shigella flexneri.